The following is a 129-amino-acid chain: UPF0212 protein MA_1372 (129 aa).

The protein belongs to the UPF0212 family.

This Methanosarcina acetivorans (strain ATCC 35395 / DSM 2834 / JCM 12185 / C2A) protein is UPF0212 protein MA_1372.